Reading from the N-terminus, the 118-residue chain is Large ribosomal subunit protein bL19 (118 aa).

This sequence belongs to the bacterial ribosomal protein bL19 family.

Its function is as follows. This protein is located at the 30S-50S ribosomal subunit interface and may play a role in the structure and function of the aminoacyl-tRNA binding site. The chain is Large ribosomal subunit protein bL19 from Salinibacter ruber (strain DSM 13855 / M31).